A 224-amino-acid chain; its full sequence is Cytidylate kinase (224 aa).

Position 11-19 (11-19 (GPAAAGKST)) interacts with ATP.

The protein belongs to the cytidylate kinase family. Type 1 subfamily.

It is found in the cytoplasm. The catalysed reaction is CMP + ATP = CDP + ADP. It carries out the reaction dCMP + ATP = dCDP + ADP. The sequence is that of Cytidylate kinase from Geobacillus thermodenitrificans (strain NG80-2).